Consider the following 443-residue polypeptide: ATP-dependent protease ATPase subunit HslU (443 aa).

Residues isoleucine 20, 62 to 67 (GVGKTE), aspartate 255, glutamate 321, and arginine 393 contribute to the ATP site.

Belongs to the ClpX chaperone family. HslU subfamily. As to quaternary structure, a double ring-shaped homohexamer of HslV is capped on each side by a ring-shaped HslU homohexamer. The assembly of the HslU/HslV complex is dependent on binding of ATP.

It localises to the cytoplasm. ATPase subunit of a proteasome-like degradation complex; this subunit has chaperone activity. The binding of ATP and its subsequent hydrolysis by HslU are essential for unfolding of protein substrates subsequently hydrolyzed by HslV. HslU recognizes the N-terminal part of its protein substrates and unfolds these before they are guided to HslV for hydrolysis. This Helicobacter pylori (strain J99 / ATCC 700824) (Campylobacter pylori J99) protein is ATP-dependent protease ATPase subunit HslU.